An 87-amino-acid polypeptide reads, in one-letter code: DNA-directed RNA polymerase subunit omega (87 aa).

Belongs to the RNA polymerase subunit omega family. In terms of assembly, the RNAP catalytic core consists of 2 alpha, 1 beta, 1 beta' and 1 omega subunit. When a sigma factor is associated with the core the holoenzyme is formed, which can initiate transcription.

The catalysed reaction is RNA(n) + a ribonucleoside 5'-triphosphate = RNA(n+1) + diphosphate. In terms of biological role, promotes RNA polymerase assembly. Latches the N- and C-terminal regions of the beta' subunit thereby facilitating its interaction with the beta and alpha subunits. The sequence is that of DNA-directed RNA polymerase subunit omega from Ectopseudomonas mendocina (strain ymp) (Pseudomonas mendocina).